The chain runs to 173 residues: MGASSSSSVSEKSIHQFTVKDSSGKEVDLSVYQGKVLLVVNVASKCGFTESNYTQLTELYRKYKDQGFVVLAFPCNQFLSQEPGTSEEAHQFACTRFKAEYPVFQKVRVNGQNAAPVYKFLKSKKPSFLGSRIKWNFTKFLVGKDGQVIDRYGTTVSPLSIQKDIEKALAQEL.

Gly-2 carries the N-myristoyl glycine lipid modification. Cys-46 is an active-site residue.

The protein belongs to the glutathione peroxidase family. As to expression, ubiquitous.

It localises to the cell membrane. The enzyme catalyses 2 glutathione + H2O2 = glutathione disulfide + 2 H2O. In terms of biological role, may constitute a glutathione peroxidase-like protective system against oxidative stresses. The polypeptide is Probable glutathione peroxidase 5 (GPX5) (Arabidopsis thaliana (Mouse-ear cress)).